The sequence spans 870 residues: DNA mismatch repair protein MutS (870 aa).

621 to 628 serves as a coordination point for ATP; sequence GPNMAGKS. The segment at 813–834 is disordered; that stretch reads GAPRIAKSRRQRTPDPSPQFSL.

It belongs to the DNA mismatch repair MutS family.

Functionally, this protein is involved in the repair of mismatches in DNA. It is possible that it carries out the mismatch recognition step. This protein has a weak ATPase activity. In Pelobacter propionicus (strain DSM 2379 / NBRC 103807 / OttBd1), this protein is DNA mismatch repair protein MutS.